A 91-amino-acid chain; its full sequence is UPF0386 protein CC_0226 (91 aa).

The protein belongs to the UPF0386 family.

This is UPF0386 protein CC_0226 from Caulobacter vibrioides (strain ATCC 19089 / CIP 103742 / CB 15) (Caulobacter crescentus).